A 61-amino-acid polypeptide reads, in one-letter code: Small ribosomal subunit protein uS14B (61 aa).

Zn(2+) contacts are provided by cysteine 24, cysteine 27, cysteine 40, and cysteine 43.

Belongs to the universal ribosomal protein uS14 family. Zinc-binding uS14 subfamily. In terms of assembly, part of the 30S ribosomal subunit. Contacts proteins S3 and S10. Zn(2+) serves as cofactor.

In terms of biological role, binds 16S rRNA, required for the assembly of 30S particles and may also be responsible for determining the conformation of the 16S rRNA at the A site. This is Small ribosomal subunit protein uS14B from Mycolicibacterium smegmatis (strain ATCC 700084 / mc(2)155) (Mycobacterium smegmatis).